Reading from the N-terminus, the 774-residue chain is Multiple C2 domain and transmembrane region protein 11 (774 aa).

The span at 1–12 shows a compositional bias: gly residues; that stretch reads MAVNGTGNGTGD. The tract at residues 1–30 is disordered; sequence MAVNGTGNGTGDGDFSLKETSPNIGNGGVN. 3 consecutive C2 domains span residues 9–145, 184–307, and 338–471; these read GTGD…PQWY, VTGE…SLWY, and LDES…THSY. Ca(2+) is bound by residues D62, N110, D112, and D118. Helical transmembrane passes span 608 to 628 and 722 to 742; these read LFVVFLPKYCVFSMLLYCFVF and FVSCGVICFVSMKLLLTFLAF.

It belongs to the MCTP family. Ca(2+) serves as cofactor. As to expression, observed in flowers.

The protein resides in the endoplasmic reticulum membrane. In terms of biological role, may function as a signaling molecule by regulating the trafficking of other regulators. The protein is Multiple C2 domain and transmembrane region protein 11 of Arabidopsis thaliana (Mouse-ear cress).